Here is a 1398-residue protein sequence, read N- to C-terminus: DNA-directed RNA polymerase subunit beta' (1398 aa).

The Zn(2+) site is built by Cys70, Cys72, Cys85, and Cys88. Positions 460, 462, and 464 each coordinate Mg(2+). Residues Cys814, Cys888, Cys895, and Cys898 each contribute to the Zn(2+) site.

Belongs to the RNA polymerase beta' chain family. The RNAP catalytic core consists of 2 alpha, 1 beta, 1 beta' and 1 omega subunit. When a sigma factor is associated with the core the holoenzyme is formed, which can initiate transcription. It depends on Mg(2+) as a cofactor. Zn(2+) serves as cofactor.

The catalysed reaction is RNA(n) + a ribonucleoside 5'-triphosphate = RNA(n+1) + diphosphate. Its function is as follows. DNA-dependent RNA polymerase catalyzes the transcription of DNA into RNA using the four ribonucleoside triphosphates as substrates. The polypeptide is DNA-directed RNA polymerase subunit beta' (Pseudomonas putida (Arthrobacter siderocapsulatus)).